A 545-amino-acid chain; its full sequence is Glucose-6-phosphate isomerase (545 aa).

Catalysis depends on E351, which acts as the Proton donor. Catalysis depends on residues H382 and K510.

It belongs to the GPI family.

The protein localises to the cytoplasm. It carries out the reaction alpha-D-glucose 6-phosphate = beta-D-fructose 6-phosphate. The protein operates within carbohydrate biosynthesis; gluconeogenesis. It participates in carbohydrate degradation; glycolysis; D-glyceraldehyde 3-phosphate and glycerone phosphate from D-glucose: step 2/4. Its function is as follows. Catalyzes the reversible isomerization of glucose-6-phosphate to fructose-6-phosphate. This Helicobacter pylori (strain P12) protein is Glucose-6-phosphate isomerase.